A 931-amino-acid chain; its full sequence is Protocadherin gamma-A5 (931 aa).

Positions 1-29 (MASPPRGWGCGELLLPFMLLGTLCEPGSG) are cleaved as a signal peptide. 6 Cadherin domains span residues 30-133 (QIRY…FPRF), 134-242 (RDEE…APLF), 243-347 (TPSE…APEV), 348-452 (ILTS…PPNF), 453-562 (PQAS…TPEI), and 570-683 (DGST…TPID). The Extracellular segment spans residues 30–692 (QIRYSMPEEL…DPEDLDLTLY (663 aa)). N419 and N545 each carry an N-linked (GlcNAc...) asparagine glycan. A helical membrane pass occupies residues 693-713 (LVVAVAAVSCVFLAFVIVLLV). The Cytoplasmic segment spans residues 714–931 (LRLRRWHKSR…KKKSGKKEKK (218 aa)). Disordered stretches follow at residues 800 to 840 (NKEE…WPNN) and 901 to 931 (ATLTNAAGKRDGKAPAGGNGNKKKSGKKEKK). Residues 809–840 (APPNTDWRFSQAQRPGTSGSQNGDDTGTWPNN) are compositionally biased toward polar residues. Residues 921 to 931 (NKKKSGKKEKK) are compositionally biased toward basic residues.

It localises to the cell membrane. In terms of biological role, potential calcium-dependent cell-adhesion protein. May be involved in the establishment and maintenance of specific neuronal connections in the brain. The protein is Protocadherin gamma-A5 (PCDHGA5) of Homo sapiens (Human).